Consider the following 197-residue polypeptide: HTH-type transcriptional regulator BetI (197 aa).

The 61-residue stretch at 8-68 (PIRRQQLIEA…ATMGYIMSML (61 aa)) folds into the HTH tetR-type domain. Residues 31 to 50 (SIALIARLAGVSNGIISHYF) constitute a DNA-binding region (H-T-H motif).

Its pathway is amine and polyamine biosynthesis; betaine biosynthesis via choline pathway [regulation]. Repressor involved in the biosynthesis of the osmoprotectant glycine betaine. It represses transcription of the choline transporter BetT and the genes of BetAB involved in the synthesis of glycine betaine. This Pseudomonas fluorescens (strain ATCC BAA-477 / NRRL B-23932 / Pf-5) protein is HTH-type transcriptional regulator BetI.